The sequence spans 223 residues: DNA-directed RNA polymerase III subunit RPC7 (223 aa).

A compositionally biased stretch (basic and acidic residues) spans 111–124 (MMPRKKCKKGDPKS). Positions 111–223 (MMPRKKCKKG…SDDNMDEATY (113 aa)) are disordered. At threonine 134 the chain carries Phosphothreonine. The span at 144–156 (KTIEELEKRGEGE) shows a compositional bias: basic and acidic residues. Residue serine 158 is modified to Phosphoserine. Composition is skewed to acidic residues over residues 173–198 (KDDEEDGEEDAEQEDYDEEEQEEEND) and 206–223 (NGDDFGVDSDDNMDEATY).

The protein belongs to the eukaryotic RPC7 RNA polymerase subunit family. In terms of assembly, component of the RNA polymerase III complex consisting of 17 subunits: a ten-subunit horseshoe-shaped catalytic core composed of POLR3A/RPC1, POLR3B/RPC2, POLR1C/RPAC1, POLR1D/RPAC2, POLR3K/RPC10, POLR2E/RPABC1, POLR2F/RPABC2, POLR2H/RPABC3, POLR2K/RPABC4 and POLR2L/RPABC5; a mobile stalk composed of two subunits POLR3H/RPC8 and CRCP/RPC9, protruding from the core and functioning primarily in transcription initiation; and additional subunits homologous to general transcription factors of the RNA polymerase II machinery, POLR3C/RPC3-POLR3F/RPC6-POLR3G/RPC7 heterotrimer required for transcription initiation and POLR3D/RPC4-POLR3E/RPC5 heterodimer involved in both transcription initiation and termination. Directly interacts with POLR3C/RPC62. Also found in a trimeric complex with POLR3C/RPC3 and POLR3GL. Expressed at low levels in the liver.

It is found in the nucleus. The protein resides in the cytoplasm. In terms of biological role, DNA-dependent RNA polymerase catalyzes the transcription of DNA into RNA using the four ribonucleoside triphosphates as substrates. Specific peripheric component of RNA polymerase III (Pol III) which synthesizes small non-coding RNAs including 5S rRNA, snRNAs, tRNAs and miRNAs from at least 500 distinct genomic loci. Acts as a long tether that bridges POLR3C/RPC3-POLR3F/RPC6-POLR3G/RPC7 heterotrimer and the mobile stalk of Pol III, coordinating the dynamics of Pol III stalk and clamp modules during the transition from apo to elongation state. Pol III exists as two alternative complexes defined by the mutually exclusive incorporation of subunit POLR3G/RPC7alpha or POLR3GL/RPC7beta. POLR3G/RPC7alpha modulates Pol III transcriptome by specifically enhancing the transcription of snaR-A non-coding RNAs. At resting state, occupies the active site of apo Pol III and keeps Pol III in an autoinhibitory mode, preventing non-specific transcription. Pol III plays a key role in sensing and limiting infection by intracellular bacteria and DNA viruses. Acts as a nuclear and cytosolic DNA sensor involved in innate immune response. Can sense non-self dsDNA that serves as template for transcription into dsRNA. The non-self RNA polymerase III transcripts, such as Epstein-Barr virus-encoded RNAs (EBERs), induce type I interferon and NF-kappa-B through the RIG-I pathway. The sequence is that of DNA-directed RNA polymerase III subunit RPC7 (Polr3g) from Mus musculus (Mouse).